The chain runs to 570 residues: Proline--tRNA ligase (570 aa).

Residues 238-257 (ARPAPAEHAEPRPLEKVETP) are disordered.

The protein belongs to the class-II aminoacyl-tRNA synthetase family. ProS type 1 subfamily. As to quaternary structure, homodimer.

The protein localises to the cytoplasm. The catalysed reaction is tRNA(Pro) + L-proline + ATP = L-prolyl-tRNA(Pro) + AMP + diphosphate. Its function is as follows. Catalyzes the attachment of proline to tRNA(Pro) in a two-step reaction: proline is first activated by ATP to form Pro-AMP and then transferred to the acceptor end of tRNA(Pro). As ProRS can inadvertently accommodate and process non-cognate amino acids such as alanine and cysteine, to avoid such errors it has two additional distinct editing activities against alanine. One activity is designated as 'pretransfer' editing and involves the tRNA(Pro)-independent hydrolysis of activated Ala-AMP. The other activity is designated 'posttransfer' editing and involves deacylation of mischarged Ala-tRNA(Pro). The misacylated Cys-tRNA(Pro) is not edited by ProRS. This chain is Proline--tRNA ligase, found in Geobacter sulfurreducens (strain ATCC 51573 / DSM 12127 / PCA).